The sequence spans 485 residues: Noelin (485 aa).

Positions 1–24 (MSVPLLKIGVVLSTMAMITNWMSQ) are cleaved as a signal peptide. Residues Asn33, Asn103, Asn187, Asn288, Asn307, Asn394, Asn431, and Asn473 are each glycosylated (N-linked (GlcNAc...) asparagine). The stretch at 87–225 (RDARTKQLRQ…ERLRACMQKL (139 aa)) forms a coiled coil. The 253-residue stretch at 226 to 478 (ACGKLTGISD…QTLYNVTLFH (253 aa)) folds into the Olfactomedin-like domain. Cys227 and Cys409 are disulfide-bonded.

Homotetramer; disulfide-linked. Dimer of dimers, giving rise to a V-shaped homotretramer. Isoform 1 and isoform 3 interact with RTN4R. Identified in a complex with RTN4R and LINGO1. Peripherally associated with AMPAR complex. AMPAR complex consists of an inner core made of 4 pore-forming GluA/GRIA proteins (GRIA1, GRIA2, GRIA3 and GRIA4) and 4 major auxiliary subunits arranged in a twofold symmetry. One of the two pairs of distinct binding sites is occupied either by CNIH2, CNIH3 or CACNG2, CACNG3. The other harbors CACNG2, CACNG3, CACNG4, CACNG8 or GSG1L. This inner core of AMPAR complex is complemented by outer core constituents binding directly to the GluA/GRIA proteins at sites distinct from the interaction sites of the inner core constituents. Outer core constituents include at least PRRT1, PRRT2, CKAMP44/SHISA9, FRRS1L and NRN1. The proteins of the inner and outer core serve as a platform for other, more peripherally associated AMPAR constituents, including OLFM1. Alone or in combination, these auxiliary subunits control the gating and pharmacology of the AMPAR complex and profoundly impact their biogenesis and protein processing. Interacts with OLFM2. Post-translationally, in isoform 3 and isoform 4, the signal peptide is predicted to end in position 17. As to expression, expressed in the brain (at protein level). Expressed in the brain, predominantly in the cortex and hippocampus. In the pituitary only the two A-type and in the adrenal glands only the two B-type forms were detected.

Its subcellular location is the secreted. The protein resides in the synapse. It localises to the endoplasmic reticulum. It is found in the cell projection. The protein localises to the axon. Its subcellular location is the perikaryon. Functionally, contributes to the regulation of axonal growth in the embryonic and adult central nervous system by inhibiting interactions between RTN4R and LINGO1. Inhibits RTN4R-mediated axon growth cone collapse. May play an important role in regulating the production of neural crest cells by the neural tube. May be required for normal responses to olfactory stimuli. The sequence is that of Noelin (Olfm1) from Rattus norvegicus (Rat).